The chain runs to 257 residues: Type III pantothenate kinase (257 aa).

Position 5 to 12 (5 to 12 (DIGNTNIK)) interacts with ATP. Residue 107-110 (GSDR) coordinates substrate. Catalysis depends on Asp-109, which acts as the Proton acceptor. Thr-133 serves as a coordination point for ATP.

The protein belongs to the type III pantothenate kinase family. Homodimer. NH4(+) is required as a cofactor. The cofactor is K(+).

It localises to the cytoplasm. It catalyses the reaction (R)-pantothenate + ATP = (R)-4'-phosphopantothenate + ADP + H(+). The protein operates within cofactor biosynthesis; coenzyme A biosynthesis; CoA from (R)-pantothenate: step 1/5. Functionally, catalyzes the phosphorylation of pantothenate (Pan), the first step in CoA biosynthesis. This chain is Type III pantothenate kinase, found in Ehrlichia ruminantium (strain Welgevonden).